Here is a 139-residue protein sequence, read N- to C-terminus: Cytochrome c-type biogenesis protein CcmE (139 aa).

The Cytoplasmic segment spans residues 1–7 (MTKRQNR). A helical; Signal-anchor for type II membrane protein membrane pass occupies residues 8–28 (MTLVALLVIGVSLTGYLGLKA). Over 29 to 139 (FNENLLYFFS…ADALEKAKNK (111 aa)) the chain is Periplasmic. 2 residues coordinate heme: H120 and Y124.

Belongs to the CcmE/CycJ family.

It localises to the cell inner membrane. Its function is as follows. Heme chaperone required for the biogenesis of c-type cytochromes. Transiently binds heme delivered by CcmC and transfers the heme to apo-cytochromes in a process facilitated by CcmF and CcmH. This Ruthia magnifica subsp. Calyptogena magnifica protein is Cytochrome c-type biogenesis protein CcmE.